We begin with the raw amino-acid sequence, 236 residues long: Phosphoribosylaminoimidazole-succinocarboxamide synthase (236 aa).

It belongs to the SAICAR synthetase family.

It carries out the reaction 5-amino-1-(5-phospho-D-ribosyl)imidazole-4-carboxylate + L-aspartate + ATP = (2S)-2-[5-amino-1-(5-phospho-beta-D-ribosyl)imidazole-4-carboxamido]succinate + ADP + phosphate + 2 H(+). It participates in purine metabolism; IMP biosynthesis via de novo pathway; 5-amino-1-(5-phospho-D-ribosyl)imidazole-4-carboxamide from 5-amino-1-(5-phospho-D-ribosyl)imidazole-4-carboxylate: step 1/2. The protein is Phosphoribosylaminoimidazole-succinocarboxamide synthase of Campylobacter jejuni subsp. doylei (strain ATCC BAA-1458 / RM4099 / 269.97).